Consider the following 328-residue polypeptide: D-cysteine desulfhydrase (328 aa).

An N6-(pyridoxal phosphate)lysine modification is found at K51.

It belongs to the ACC deaminase/D-cysteine desulfhydrase family. As to quaternary structure, homodimer. It depends on pyridoxal 5'-phosphate as a cofactor.

It catalyses the reaction D-cysteine + H2O = hydrogen sulfide + pyruvate + NH4(+) + H(+). Catalyzes the alpha,beta-elimination reaction of D-cysteine and of several D-cysteine derivatives. It could be a defense mechanism against D-cysteine. This chain is D-cysteine desulfhydrase, found in Klebsiella pneumoniae (strain 342).